An 816-amino-acid polypeptide reads, in one-letter code: uncharacterized protein (816 aa).

2 disordered regions span residues 1-81 (MDVV…NSNN) and 391-411 (LGSN…NNDF). A compositionally biased stretch (low complexity) spans 28–44 (EVPPQRPRQQNRWKPWW). Positions 64-81 (QGRSSPTTDFQDSVNSNN) are enriched in polar residues. Phosphoserine is present on residues S76 and S79. Residues 391 to 400 (LGSNSSTNEN) are compositionally biased toward low complexity.

This is an uncharacterized protein from Saccharomyces cerevisiae (strain ATCC 204508 / S288c) (Baker's yeast).